Consider the following 203-residue polypeptide: Superoxide dismutase [Mn] (203 aa).

Mn(2+) contacts are provided by histidine 27, histidine 81, aspartate 164, and histidine 168.

Belongs to the iron/manganese superoxide dismutase family. In terms of assembly, homodimer. It depends on Mn(2+) as a cofactor.

It catalyses the reaction 2 superoxide + 2 H(+) = H2O2 + O2. Destroys superoxide anion radicals which are normally produced within the cells and which are toxic to biological systems. The sequence is that of Superoxide dismutase [Mn] (sodA) from Pseudomonas putida (Arthrobacter siderocapsulatus).